We begin with the raw amino-acid sequence, 798 residues long: Protocadherin beta-14 (798 aa).

The signal sequence occupies residues 1 to 26 (MEIRGALDLRKRQVLIFLVLLGLSRA). Over 27–686 (GTESAHYSVA…APAQAQADSL (660 aa)) the chain is Extracellular. 5 Cadherin domains span residues 35–133 (VAEE…SPTF), 138–242 (ILIK…APEF), 247–347 (YEVQ…PPEV), 352–451 (ITKR…APAF), and 456–561 (YTLF…SPFV). Cysteine 96 and cysteine 102 form a disulfide bridge. Residue asparagine 169 is glycosylated (N-linked (GlcNAc...) asparagine). Asparagine 359, asparagine 418, and asparagine 436 each carry an N-linked (GlcNAc...) asparagine glycan. N-linked (GlcNAc...) asparagine glycosylation is present at asparagine 567. In terms of domain architecture, Cadherin 6 spans 568–671 (GSAPCTELVP…LVDGFSQPYL (104 aa)). The chain crosses the membrane as a helical span at residues 687 to 711 (TVYLVVALASVSSLFLFSVLLFVAV). Topologically, residues 712 to 798 (RLCRRSRAAS…FRNSFGLNIQ (87 aa)) are cytoplasmic.

It is found in the cell membrane. In terms of biological role, potential calcium-dependent cell-adhesion protein. May be involved in the establishment and maintenance of specific neuronal connections in the brain. This chain is Protocadherin beta-14 (PCDHB14), found in Pan troglodytes (Chimpanzee).